Consider the following 462-residue polypeptide: Tubby-like F-box protein 7 (462 aa).

Positions S54–G109 constitute an F-box domain. 2 disordered regions span residues F317–N338 and Q383–N418. Positions Q383 to S417 are enriched in low complexity.

It belongs to the TUB family. Ubiquitous.

The protein is Tubby-like F-box protein 7 (TULP7) of Oryza sativa subsp. japonica (Rice).